Consider the following 67-residue polypeptide: Histone H2A (67 aa).

At Q60 the chain carries N5-methylglutamine.

The protein belongs to the histone H2A family. The nucleosome is a histone octamer containing two molecules each of H2A, H2B, H3 and H4 assembled in one H3-H4 heterotetramer and two H2A-H2B heterodimers. The octamer wraps approximately 147 bp of DNA.

The protein localises to the nucleus. The protein resides in the chromosome. Core component of nucleosome. Nucleosomes wrap and compact DNA into chromatin, limiting DNA accessibility to the cellular machineries which require DNA as a template. Histones thereby play a central role in transcription regulation, DNA repair, DNA replication and chromosomal stability. DNA accessibility is regulated via a complex set of post-translational modifications of histones, also called histone code, and nucleosome remodeling. The protein is Histone H2A of Olisthodiscus luteus (Marine phytoflagellate).